Here is a 184-residue protein sequence, read N- to C-terminus: Ribosome maturation factor RimM (184 aa).

Residues 93–165 enclose the PRC barrel domain; it reads DEGWYEHELV…YILITPPSGL (73 aa).

The protein belongs to the RimM family. Binds ribosomal protein uS19.

It is found in the cytoplasm. An accessory protein needed during the final step in the assembly of 30S ribosomal subunit, possibly for assembly of the head region. Essential for efficient processing of 16S rRNA. May be needed both before and after RbfA during the maturation of 16S rRNA. It has affinity for free ribosomal 30S subunits but not for 70S ribosomes. The polypeptide is Ribosome maturation factor RimM (Paenarthrobacter aurescens (strain TC1)).